Consider the following 644-residue polypeptide: MFQDNPLLAQLKQQLHSQTPRAEGVVKATEKGFGFLEVDAQKSYFIPPPQMKKVMHGDRVIAVIHTEKEKESAEPEELIEPFLTRFVGRVQKKDDRLSIVPDHPLLKDAIPCRAERGVSHDFQNGDWAVAEMRRHPLKGDRGFYAELTQFITFGEDHFVPWWVTLARHNLEREAPDGVATEMLDENLTREDLTALDFVTIDSASTEDMDDALYVEALDGDRLQLTVAIADPTAWIAEGSKLDNIAKVRAFTNYLPGFNIPMLPRELSDDLCSLREGVQRPALVCRMIIEADGAISDDIHFFAAIIESKAKLAYDDVSDWLEEKGDWQPGSEAIAAQIRLLQQICQRRSAWRTEHALVFKDRPDYRFVLGEKGEVLDIVAEPRRIANRIVEESMIAANICAARVLRDKLGFGVYNVHAGFDPASTEQLATLLQSHGMHVDANDVLTLPGFCKLRRELDAQPSGFLDSRIRRFQSFAEISTEPGPHFGLGLEAYATWTSPIRKYGDMVNHRLLKAIIKGESATRPQDEATVQMAERRRLNRMAERDVGDWLYARFLKDKAGTDSRFAAEIIDVSRGGMRVRLVDNGAVAFIPAPFLHAVRDELVCSQENGTVQIKGETVYKVTDVIDVTIAEVRMETRSVIARPVA.

The RNB domain maps to Arg189–Lys516. The S1 motif domain maps to Asp561 to Val643.

The protein belongs to the RNR ribonuclease family. RNase II subfamily.

It is found in the cytoplasm. It catalyses the reaction Exonucleolytic cleavage in the 3'- to 5'-direction to yield nucleoside 5'-phosphates.. Functionally, involved in mRNA degradation. Hydrolyzes single-stranded polyribonucleotides processively in the 3' to 5' direction. The protein is Exoribonuclease 2 of Cronobacter sakazakii (strain ATCC BAA-894) (Enterobacter sakazakii).